Here is a 308-residue protein sequence, read N- to C-terminus: Snake venom metalloprotease inhibitor 02D01 (308 aa).

Residues 1–23 form the signal peptide; it reads MFVSRLAASGLLLLSLLALSLDG. Residues 24–38 constitute a propeptide that is removed on maturation; that stretch reads KPLPQRQPHHIQPME. The residue at position 39 (Gln-39) is a Pyrrolidone carboxylic acid. Residues 42-50 constitute a propeptide that is removed on maturation; sequence LAPDAPPLE. Gln-51 is subject to Pyrrolidone carboxylic acid. The propeptide occupies 54–62; that stretch reads LAPDAPPLE. Residue Gln-63 is modified to Pyrrolidone carboxylic acid. The propeptide occupies 66–74; that stretch reads LAPAAPPLE. A Pyrrolidone carboxylic acid modification is found at Gln-75. A propeptide spanning residues 78–86 is cleaved from the precursor; it reads LAPDAPPME. Residue Gln-87 is modified to Pyrrolidone carboxylic acid. A propeptide spanning residues 90-98 is cleaved from the precursor; it reads LAPDAPPME. A Pyrrolidone carboxylic acid modification is found at Gln-99. A propeptide spanning residues 102-110 is cleaved from the precursor; the sequence is LAPDAPPME. Gln-111 carries the post-translational modification Pyrrolidone carboxylic acid. A propeptide spanning residues 114–122 is cleaved from the precursor; the sequence is LAPDAPPME. Gln-123 is subject to Pyrrolidone carboxylic acid. Positions 126–134 are excised as a propeptide; that stretch reads LAPDAAPLE. Pyrrolidone carboxylic acid is present on Gln-135. A propeptide spanning residues 138–146 is cleaved from the precursor; it reads LAPDAPPME. A Pyrrolidone carboxylic acid modification is found at Gln-147. Residues 150–158 constitute a propeptide that is removed on maturation; that stretch reads LAPDAPPME. The residue at position 159 (Gln-159) is a Pyrrolidone carboxylic acid. The propeptide occupies 162 to 249; the sequence is QPQIPSLMEQ…KQASQKWGRL (88 aa). Polar residues predominate over residues 172–182; the sequence is RQLSSGGTTAL. Disordered regions lie at residues 172–228 and 252–279; these read RQLS…AAAT and HDHD…GARR. Over residues 198 to 209 the composition is skewed to gly residues; that stretch reads VVGGGGGGGGGS. The segment covering 210 to 227 has biased composition (low complexity); that stretch reads KAALALPKPPKAKGAAAA. The span at 265–277 shows a compositional bias: gly residues; sequence SVGGGGGGGGGGA. The propeptide occupies 278–286; it reads RRLKGLAKK. An intrachain disulfide couples Cys-292 to Cys-308.

It in the C-terminal section; belongs to the natriuretic peptide family. The protein in the central section; belongs to the pHpG family. Expressed by the venom gland.

The protein localises to the secreted. Its function is as follows. pEKW and poly-His-poly-Gly peptides may serve as metalloproteinase inhibitors during glandular storage. Their inhibition may be instantly disengaged, by dilution or physiochemical change, when venom is injected into tissue of the prey. Has a vasorelaxant activity in rat aortic strips and a diuretic potency in anesthetized rats. May act by activating natriuretic receptors (NPR1 and/or NPR2). The protein is Snake venom metalloprotease inhibitor 02D01 of Echis ocellatus (Ocellated saw-scaled viper).